Consider the following 393-residue polypeptide: Ubiquitin-like modifier-activating enzyme 5 (393 aa).

The ATP site is built by Gly75, Asp96, Lys119, Asn142, and Asn175. Zn(2+) is bound by residues Cys217 and Cys220. The active-site Glycyl thioester intermediate is Cys241. Cys294 and Cys299 together coordinate Zn(2+).

The protein belongs to the ubiquitin-activating E1 family. UBA5 subfamily.

Functionally, E1-like enzyme which activates UFM1. This is Ubiquitin-like modifier-activating enzyme 5 from Bombyx mori (Silk moth).